The chain runs to 60 residues: Cecropin-B (60 aa).

Residues 1-25 form the signal peptide; sequence MNFTKLFILVAIAVLVVVGVQPVDG. At L59 the chain carries Leucine amide.

Belongs to the cecropin family.

It is found in the secreted. Functionally, cecropins have lytic and antibacterial activity against several Gram-positive and Gram-negative bacteria. This chain is Cecropin-B (CecB), found in Anopheles gambiae (African malaria mosquito).